The primary structure comprises 1072 residues: Integrator complex subunit 3 homolog (1072 aa).

2 disordered regions span residues 920–943 (YPSS…STPS) and 1002–1072 (DTTV…NDSD). 4 positions are modified to phosphoserine: Ser-1042, Ser-1043, Ser-1047, and Ser-1048.

This sequence belongs to the Integrator subunit 3 family. As to quaternary structure, belongs to the multiprotein complex Integrator, at least composed of IntS1, IntS2, IntS3, IntS4, omd/IntS5, IntS6, defl/IntS7, IntS8, IntS9, IntS10, IntS11, IntS12, asun/IntS13, IntS14 and IntS15. The core complex associates with protein phosphatase 2A subunits mts/PP2A and Pp2A-29B, to form the Integrator-PP2A (INTAC) complex.

It localises to the nucleus. It is found in the cytoplasm. Its function is as follows. Component of the integrator complex, a multiprotein complex that terminates RNA polymerase II (Pol II) transcription in the promoter-proximal region of genes. The integrator complex provides a quality checkpoint during transcription elongation by driving premature transcription termination of transcripts that are unfavorably configured for transcriptional elongation: the complex terminates transcription by (1) catalyzing dephosphorylation of the C-terminal domain (CTD) of Pol II subunit Polr2A/Rbp1 and Spt5, and (2) degrading the exiting nascent RNA transcript via endonuclease activity. The integrator complex is also involved in the 3'-end processing of the U7 snRNA, and also the spliceosomal snRNAs U1, U2, U4 and U5. In Drosophila yakuba (Fruit fly), this protein is Integrator complex subunit 3 homolog (IntS3).